The following is a 341-amino-acid chain: UDP-glucose 4-epimerase (341 aa).

It belongs to the polysaccharide synthase family.

It carries out the reaction UDP-alpha-D-glucose = UDP-alpha-D-galactose. Its function is as follows. Epimerizes UDP-galactose to UDP-glucose. In Rickettsia conorii (strain ATCC VR-613 / Malish 7), this protein is UDP-glucose 4-epimerase (capD).